The chain runs to 549 residues: Glutamyl-tRNA(Gln) amidotransferase subunit B, mitochondrial (549 aa).

Residues 1 to 23 constitute a mitochondrion transit peptide; sequence MLRISRDTKIVARVTHVTKSRTY.

This sequence belongs to the GatB/GatE family. GatB subfamily. As to quaternary structure, subunit of the heterotrimeric GatFAB amidotransferase (AdT) complex, composed of A, B and F subunits.

Its subcellular location is the mitochondrion. The enzyme catalyses L-glutamyl-tRNA(Gln) + L-glutamine + ATP + H2O = L-glutaminyl-tRNA(Gln) + L-glutamate + ADP + phosphate + H(+). Its function is as follows. Allows the formation of correctly charged Gln-tRNA(Gln) through the transamidation of misacylated Glu-tRNA(Gln) in the mitochondria. The reaction takes place in the presence of glutamine and ATP through an activated gamma-phospho-Glu-tRNA(Gln). The chain is Glutamyl-tRNA(Gln) amidotransferase subunit B, mitochondrial from Yarrowia lipolytica (strain CLIB 122 / E 150) (Yeast).